A 1207-amino-acid polypeptide reads, in one-letter code: Histidine kinase 1 (1207 aa).

The segment covering 1 to 10 has biased composition (polar residues); sequence MRGDSFSMSI. Residues 1 to 20 form a disordered region; sequence MRGDSFSMSIENLPDSPMGS. At 1–81 the chain is on the cytoplasmic side; it reads MRGDSFSMSI…SSYYSVFVVR (81 aa). Residues 82-102 form a helical membrane-spanning segment; it reads LAIMVMLAILIGLLTVLTWHF. The Extracellular portion of the chain corresponds to 103-446; sequence TRIYTKQSLQ…GKVDERAFKT (344 aa). A helical transmembrane segment spans residues 447–467; that stretch reads LIILISASVCIFFIGCVCILI. Residues 468 to 1207 lie on the Cytoplasmic side of the membrane; sequence LTNGVSKEMK…PSAFQTSLSA (740 aa). The region spanning 505 to 763 is the Histidine kinase domain; it reads NMSHELRTPM…LMRLYLILST (259 aa). His-508 carries the phosphohistidine; by autocatalysis modification. Disordered stretches follow at residues 964-987 and 1000-1021; these read DTCS…VKPS and DATT…PEEE. Positions 975–984 are enriched in basic and acidic residues; sequence SGEKQVDKSV. A compositionally biased stretch (low complexity) spans 1000–1014; it reads DATTSNDDSTSASMT. Positions 1045-1196 constitute a Response regulatory domain; that stretch reads RILLAEDTPV…LMVSTILSLT (152 aa). Asp-1127 is subject to 4-aspartylphosphate.

As to quaternary structure, interacts with AHP2, depending of the phosphorylation state of Asp-1075 in the receiver domain, but probably not with AHP1 and AHP3. Autophosphorylated predominantly on His residues. Activation probably requires a transfer of a phosphate group between a His in the transmitter domain and an Asp of the receiver domain. As to expression, mostly expressed in roots, and, to a lower extent, in stems, leaves and flowers.

The protein resides in the cell membrane. It catalyses the reaction ATP + protein L-histidine = ADP + protein N-phospho-L-histidine.. Its function is as follows. Functions as an osmosensor histidine kinase that detects water stress and transmits the stress signal to a downstream MAPK cascade. This protein undergoes an ATP-dependent autophosphorylation at a conserved histidine residue in the kinase core, and a phosphoryl group is then transferred to a conserved aspartate residue in the receiver domain. Positive regulator of drought and salt stress responses, and abscisic acid (ABA) signaling. Confers drought tolerance, probably by regulating levels of ABA accumulation. Plays a redundant role in regulating plant growth and development. Required for the regulation of desiccation processes during seed formation. The protein is Histidine kinase 1 (AHK1) of Arabidopsis thaliana (Mouse-ear cress).